The primary structure comprises 120 residues: Ribonuclease P protein component (120 aa).

Belongs to the RnpA family. As to quaternary structure, consists of a catalytic RNA component (M1 or rnpB) and a protein subunit.

It catalyses the reaction Endonucleolytic cleavage of RNA, removing 5'-extranucleotides from tRNA precursor.. Its function is as follows. RNaseP catalyzes the removal of the 5'-leader sequence from pre-tRNA to produce the mature 5'-terminus. It can also cleave other RNA substrates such as 4.5S RNA. The protein component plays an auxiliary but essential role in vivo by binding to the 5'-leader sequence and broadening the substrate specificity of the ribozyme. The protein is Ribonuclease P protein component of Dehalococcoides mccartyi (strain ATCC BAA-2266 / KCTC 15142 / 195) (Dehalococcoides ethenogenes (strain 195)).